The primary structure comprises 196 residues: Heat shock protein beta-8 (196 aa).

The disordered stretch occupies residues 1–34; that stretch reads MADGQMPFPCHYTSRRRRDPFRDSPLSSRLLDDG. Residues 23–34 are compositionally biased toward low complexity; sequence DSPLSSRLLDDG. 2 positions are modified to phosphoserine: Ser-24 and Ser-57. Phosphothreonine is present on Thr-63. Asymmetric dimethylarginine occurs at positions 71 and 78. One can recognise a sHSP domain in the interval 74-185; that stretch reads TAMTRFGVPA…PFGESSFNNE (112 aa). At Ser-87 the chain carries Phosphoserine. The interval 176–196 is disordered; that stretch reads PFGESSFNNELPQDGQEVTCT. Polar residues predominate over residues 178 to 196; it reads GESSFNNELPQDGQEVTCT.

Belongs to the small heat shock protein (HSP20) family. Monomer. Forms a ternary complex with BAG3 and HSPA1A. Component of the chaperone-assisted selective autophagy (CASA) complex consisting of BAG3, HSPA8/HSC70, HSPB8 and STUB1/CHIP. Interacts with HSPB1. Interacts with DNAJB6. Interacts with BAG3. Phosphorylated.

Its subcellular location is the cytoplasm. The protein localises to the nucleus. Functionally, involved in the chaperone-assisted selective autophagy (CASA), a crucial process for protein quality control, particularly in mechanical strained cells and tissues such as muscle. Displays temperature-dependent chaperone activity. This Bos taurus (Bovine) protein is Heat shock protein beta-8 (HSPB8).